Consider the following 148-residue polypeptide: Ubiquitin-conjugating enzyme E2 13 (148 aa).

The UBC core domain maps to 2-148 (ALPKRIIKEI…AREWTKKYAV (147 aa)). The active-site Glycyl thioester intermediate is cysteine 86.

It belongs to the ubiquitin-conjugating enzyme family. In terms of assembly, heterodimer with spm2.

The enzyme catalyses S-ubiquitinyl-[E1 ubiquitin-activating enzyme]-L-cysteine + [E2 ubiquitin-conjugating enzyme]-L-cysteine = [E1 ubiquitin-activating enzyme]-L-cysteine + S-ubiquitinyl-[E2 ubiquitin-conjugating enzyme]-L-cysteine.. It functions in the pathway protein modification; protein ubiquitination. Functionally, has a role in the DNA error-free postreplication repair (PRR) pathway. The ubc13/spm2 heterodimer catalyzes the synthesis of non-canonical poly-ubiquitin chains that are linked through 'Lys-63'. This chain is Ubiquitin-conjugating enzyme E2 13 (ubc13), found in Schizosaccharomyces pombe (strain 972 / ATCC 24843) (Fission yeast).